Here is a 261-residue protein sequence, read N- to C-terminus: MTMQVDPSANSSAASSAAPGTTVDRAEIEKFSKLSQEWWDPTGKMAPLHRINPLRLQFIRDAACRKFDRNARSLNCLAGLRLLDIGCGAGLLCEPFTRLGAQVIGVDPSASNIAAAKLHAEKAHLSIDYRCTTVEDMDVRERFDIILAMEVVEHVADVGLFLDRCAAMLKPGGMMAASTLNRNWKSFALGIVAAEYVLRWLPRGTHQWDKFVTPDELARHFERNGLGITEQSGVVYSPFGDRWSLSSDMDVNYMVVAEAVG.

Positions 1-22 are disordered; sequence MTMQVDPSANSSAASSAAPGTT. Positions 8–18 are enriched in low complexity; that stretch reads SANSSAASSAA. S-adenosyl-L-methionine-binding residues include Arg-55, Gly-86, Asp-107, and Met-149.

Belongs to the methyltransferase superfamily. UbiG/COQ3 family.

The catalysed reaction is a 3-demethylubiquinol + S-adenosyl-L-methionine = a ubiquinol + S-adenosyl-L-homocysteine + H(+). It carries out the reaction a 3-(all-trans-polyprenyl)benzene-1,2-diol + S-adenosyl-L-methionine = a 2-methoxy-6-(all-trans-polyprenyl)phenol + S-adenosyl-L-homocysteine + H(+). Its pathway is cofactor biosynthesis; ubiquinone biosynthesis. Functionally, O-methyltransferase that catalyzes the 2 O-methylation steps in the ubiquinone biosynthetic pathway. This is Ubiquinone biosynthesis O-methyltransferase from Nitrobacter winogradskyi (strain ATCC 25391 / DSM 10237 / CIP 104748 / NCIMB 11846 / Nb-255).